The sequence spans 251 residues: Pyruvate formate-lyase-activating enzyme (251 aa).

The Radical SAM core domain maps to Val-15–Lys-244. Positions 29, 33, and 36 each coordinate [4Fe-4S] cluster. Residues Tyr-35–His-37, Gly-79, Asp-134–Lys-136, and His-207 contribute to the S-adenosyl-L-methionine site.

Belongs to the organic radical-activating enzymes family. The cofactor is [4Fe-4S] cluster.

The protein resides in the cytoplasm. It catalyses the reaction glycyl-[formate C-acetyltransferase] + reduced [flavodoxin] + S-adenosyl-L-methionine = glycin-2-yl radical-[formate C-acetyltransferase] + semiquinone [flavodoxin] + 5'-deoxyadenosine + L-methionine + H(+). Functionally, activation of pyruvate formate-lyase under anaerobic conditions by generation of an organic free radical, using S-adenosylmethionine and reduced flavodoxin as cosubstrates to produce 5'-deoxy-adenosine. This Staphylococcus aureus (strain N315) protein is Pyruvate formate-lyase-activating enzyme (pflA).